Here is a 637-residue protein sequence, read N- to C-terminus: Chaperone protein DnaK (637 aa).

Position 196 is a phosphothreonine; by autocatalysis (Thr196). Disordered stretches follow at residues Ala503–Glu525 and Ser598–Lys637. Low complexity predominate over residues Ser598–Ser619.

It belongs to the heat shock protein 70 family.

Its function is as follows. Acts as a chaperone. The protein is Chaperone protein DnaK of Chlorobium chlorochromatii (strain CaD3).